The sequence spans 656 residues: F-box/LRR-repeat protein 10 (656 aa).

The region spanning 20-66 (ERSLDLLPAALLETIMTKLDVASLCSLASTCKTLKSCVTRVLTFTPN) is the F-box domain. LRR repeat units follow at residues 71-96 (NVSL…KLDC), 120-145 (CRDF…CLGS), 151-176 (GRSI…ALMF), 194-221 (SDRL…EISG), 243-268 (VDCI…DIRD), 277-301 (VSDL…SLIR), 310-335 (FRRV…CLGG), 336-361 (FCRV…SIYH), 362-387 (GPKL…SLRR), 388-412 (CHLL…DLRG), 413-437 (CRNL…LLDG), 439-463 (DISD…SVRG), 464-491 (CRNL…DLSN), 492-517 (LPNL…QLRE), 518-551 (CRLI…DLYD), and 552-578 (CGGI…GITG). Residues 632-656 (ILGDEGDVEMEDAEDESEEDASEED) are disordered.

The protein is F-box/LRR-repeat protein 10 (FBL10) of Arabidopsis thaliana (Mouse-ear cress).